The following is a 135-amino-acid chain: 2-iminobutanoate/2-iminopropanoate deaminase (135 aa).

Ser-2 carries the post-translational modification N-acetylserine. Lys-13, Lys-60, Lys-67, and Lys-134 each carry N6-succinyllysine.

Belongs to the RutC family. As to quaternary structure, homotrimer. Interacts with YTHDF2. Expressed predominantly in liver and kidney. Lower levels in lung and brain.

Its subcellular location is the cytoplasm. It localises to the nucleus. It is found in the peroxisome. The protein resides in the mitochondrion. It carries out the reaction 2-iminobutanoate + H2O = 2-oxobutanoate + NH4(+). It catalyses the reaction 2-iminopropanoate + H2O = pyruvate + NH4(+). Its function is as follows. Catalyzes the hydrolytic deamination of enamine/imine intermediates that form during the course of normal metabolism. May facilitate the release of ammonia from these potentially toxic reactive metabolites, reducing their impact on cellular components. It may act on enamine/imine intermediates formed by several types of pyridoxal-5'-phosphate-dependent dehydratases including L-threonine dehydratase. Functionally, also promotes endoribonucleolytic cleavage of some transcripts by promoting recruitment of the ribonuclease P/MRP complex. Acts by bridging YTHDF2 and the ribonuclease P/MRP complex. RIDA/HRSP12 binds to N6-methyladenosine (m6A)-containing mRNAs containing a 5'-GGUUC-3' motif: cooperative binding of RIDA/HRSP12 and YTHDF2 to such transcripts lead to recruitment of the ribonuclease P/MRP complex and subsequent endoribonucleolytic cleavage. In Mus musculus (Mouse), this protein is 2-iminobutanoate/2-iminopropanoate deaminase.